The primary structure comprises 110 residues: PCNA-associated factor (110 aa).

K15 participates in a covalent cross-link: Glycyl lysine isopeptide (Lys-Gly) (interchain with G-Cter in ubiquitin). The D-box signature appears at 23-34 (RKVLGSSTFVTN). K24 is subject to N6-acetyllysine; alternate. K24 participates in a covalent cross-link: Glycyl lysine isopeptide (Lys-Gly) (interchain with G-Cter in ubiquitin); alternate. S28 and S71 each carry phosphoserine. Over residues 28–39 (SSTFVTNSSSSS) the composition is skewed to low complexity. Positions 28–110 (SSTFVTNSSS…QPDHRDDENE (83 aa)) are disordered. The PIP-box motif lies at 61-71 (QKGIGEFFRLS). The segment covering 71–80 (SPKESKKENQ) has biased composition (basic and acidic residues). Residues 77-79 (KEN) carry the KEN box motif. The short motif at 84–96 (EAGTSGLGKAKRK) is the Initiation motif element.

As to quaternary structure, interacts (when monoubiquitinated at Lys-15 and Lys-24) with PCNA. Interacts with isoform 2/p33ING1b of ING1. Interacts with BRCA1. Post-translationally, monoubiquitinated at Lys-15 and Lys-24 during normal S phase, promoting its association with PCNA. Also diubiquitinated at these 2 sites. Following DNA damage, monoubiquitin chains at Lys-15 and Lys-24 are probably extended, leading to disrupt the interaction with PCNA. Polyubiquitinated by the APC/C complex at the mitotic exit, leading to its degradation by the proteasome.

Its subcellular location is the nucleus. It localises to the cytoplasm. The protein resides in the perinuclear region. Functionally, PCNA-binding protein that acts as a regulator of DNA repair during DNA replication. Following DNA damage, the interaction with PCNA is disrupted, facilitating the interaction between monoubiquitinated PCNA and the translesion DNA synthesis DNA polymerase eta (POLH) at stalled replisomes, facilitating the bypass of replication-fork-blocking lesions. Also acts as a regulator of centrosome number. This is PCNA-associated factor from Mus musculus (Mouse).